We begin with the raw amino-acid sequence, 361 residues long: Beta-hexosaminidase (361 aa).

Substrate is bound by residues Asp-69, Arg-77, Arg-144, and 174–175 (KH). The Proton donor/acceptor role is filled by His-187. The Nucleophile role is filled by Asp-258.

This sequence belongs to the glycosyl hydrolase 3 family. NagZ subfamily.

The protein localises to the cytoplasm. It carries out the reaction Hydrolysis of terminal non-reducing N-acetyl-D-hexosamine residues in N-acetyl-beta-D-hexosaminides.. Its pathway is cell wall biogenesis; peptidoglycan recycling. In terms of biological role, plays a role in peptidoglycan recycling by cleaving the terminal beta-1,4-linked N-acetylglucosamine (GlcNAc) from peptide-linked peptidoglycan fragments, giving rise to free GlcNAc, anhydro-N-acetylmuramic acid and anhydro-N-acetylmuramic acid-linked peptides. This chain is Beta-hexosaminidase, found in Neisseria meningitidis serogroup C (strain 053442).